A 454-amino-acid polypeptide reads, in one-letter code: Glutamyl-tRNA reductase (454 aa).

Substrate is bound by residues 49–52 (TCNR), S109, 114–116 (ETQ), and Q120. The active-site Nucleophile is C50. 189–194 (GAGKMG) contacts NADP(+).

It belongs to the glutamyl-tRNA reductase family. As to quaternary structure, homodimer.

The catalysed reaction is (S)-4-amino-5-oxopentanoate + tRNA(Glu) + NADP(+) = L-glutamyl-tRNA(Glu) + NADPH + H(+). Its pathway is porphyrin-containing compound metabolism; protoporphyrin-IX biosynthesis; 5-aminolevulinate from L-glutamyl-tRNA(Glu): step 1/2. Functionally, catalyzes the NADPH-dependent reduction of glutamyl-tRNA(Glu) to glutamate 1-semialdehyde (GSA). This is Glutamyl-tRNA reductase from Geobacillus kaustophilus (strain HTA426).